The sequence spans 420 residues: D-tagatose-1,6-bisphosphate aldolase subunit GatZ (420 aa).

This sequence belongs to the GatZ/KbaZ family. GatZ subfamily. As to quaternary structure, forms a complex with GatY.

It functions in the pathway carbohydrate metabolism; D-tagatose 6-phosphate degradation; D-glyceraldehyde 3-phosphate and glycerone phosphate from D-tagatose 6-phosphate: step 2/2. Functionally, component of the tagatose-1,6-bisphosphate aldolase GatYZ that is required for full activity and stability of the Y subunit. Could have a chaperone-like function for the proper and stable folding of GatY. When expressed alone, GatZ does not show any aldolase activity. Is involved in the catabolism of galactitol. In Escherichia coli O6:K15:H31 (strain 536 / UPEC), this protein is D-tagatose-1,6-bisphosphate aldolase subunit GatZ.